Here is a 223-residue protein sequence, read N- to C-terminus: MKRTKSIRHASFRKNWSARHLTPVALAVATVFMLASCEKSDETVSLYQNADDCSAANPGKSAECTTAYNNALKEAERTAPKYATREDCVAEFGEGQCQQAPAQAGMAPENQAQAQQSSGSFWMPLMAGYMMGRLMGGGAGFAQQPLFSSKNPASPAYGKYTDATGKNYGAAQPGRTMTVPKTAMAPKPATTTTVTRGGFGESVAKQSTMQRSATGTSSRSMGG.

Positions 178 to 195 are enriched in low complexity; the sequence is TVPKTAMAPKPATTTTVT. The disordered stretch occupies residues 178 to 223; that stretch reads TVPKTAMAPKPATTTTVTRGGFGESVAKQSTMQRSATGTSSRSMGG. Polar residues predominate over residues 204 to 223; sequence AKQSTMQRSATGTSSRSMGG.

Belongs to the UPF0441 family.

The protein is UPF0441 protein YgiB of Shigella boydii serotype 18 (strain CDC 3083-94 / BS512).